Consider the following 568-residue polypeptide: K(+) efflux antiporter 5 (568 aa).

A signal peptide spans 1-20; sequence MARFAVIGLTFLLLLGTSLS. The disordered stretch occupies residues 59 to 78; the sequence is EFSENDSPEGSDGASFNSSV. 12 helical membrane passes run 154–174, 178–198, 201–221, 230–250, 264–284, 298–318, 334–354, 389–409, 422–442, 447–467, 476–496, and 510–530; these read LISD…VFSC, PVIV…LKFI, MVQV…ALGL, VVGP…MFLC, GIFV…KFLV, IGIL…LPVL, LLLI…SFVP, LGLS…TTEF, NLFA…HFLW, ILLA…AVVV, ISFH…VLLS, and LLLL…FKLI.

Belongs to the monovalent cation:proton antiporter 2 (CPA2) transporter (TC 2.A.37) family. KEA (TC 2.A.37.1) subfamily. In terms of tissue distribution, expressed in roots, stems, leaves, flowers and silique.

It localises to the golgi apparatus membrane. Its subcellular location is the golgi apparatus. The protein resides in the trans-Golgi network membrane. It is found in the prevacuolar compartment membrane. The protein localises to the endomembrane system. The catalysed reaction is K(+)(in) + H(+)(out) = K(+)(out) + H(+)(in). Functionally, electroneutral K(+)/H(+) efflux antiporter involved in K(+) homeostasis and osmotic adjustment. Together with KEA4 and KEA6, promotes growth and development, and facilitates endosomal pH and ions homeostasis, as well as salt tolerance (e.g. K(+), NaCl and LiCl), probably by supporting cell wall biosynthesis during rapid etiolated seedling growth. This is K(+) efflux antiporter 5 from Arabidopsis thaliana (Mouse-ear cress).